The sequence spans 343 residues: Tumor necrosis factor receptor superfamily member wgn (343 aa).

2 disordered regions span residues 1 to 44 and 74 to 96; these read MMPP…IGGS and SSAANTDIAPPDPPPVSQVSIAS. A signal peptide spans 1-76; the sequence is MMPPRLPGGH…ATSASSSSSA (76 aa). Low complexity predominate over residues 13-24; that stretch reads AMRSRSSSSGHH. Over residues 29–39 the composition is skewed to basic residues; sequence FHKRRRRRQQH. At 77 to 201 the chain is on the extracellular side; that stretch reads ANTDIAPPDP…AAWVLDWQTG (125 aa). One copy of the TNFR-Cys repeat lies at 99 to 137; the sequence is PCAPQHWWDSQRDRCTPCTRCQGEMIPLRPCQLHTDTIC. Disulfide bonds link Cys-100/Cys-113, Cys-116/Cys-129, and Cys-119/Cys-137. The helical transmembrane segment at 202–222 threads the bilayer; that stretch reads VLYVAVLTCLVFFSVAACILI. The Cytoplasmic portion of the chain corresponds to 223–343; sequence HHMRQWRRME…GVRGCSGLKG (121 aa). Residues 225–257 adopt a coiled-coil conformation; it reads MRQWRRMERRLDQDVEELSTKLMAKLAEVQSLD.

As to quaternary structure, monomer. Interacts (via extracellular cystein-rich domain) with egr (via secreted TNF-homology soluble form); forms heterohexamers when 3 copies associate with egr trimers. Interacts with Traf6. Interacts with Moe. In terms of tissue distribution, expressed in the adult midgut; under normal conditions expressed at higher levels than the other TNF receptor grnd.

The protein resides in the cell membrane. It localises to the cytoplasmic vesicle membrane. Its function is as follows. Receptor for egr. Involved in induction of apoptosis by triggering JNK signaling. Mediates the tumor suppressor activity of egr which eliminates oncogenic cells from epithelia, thereby maintaining epithelial integrity. Following UV-induced epidermal damage, binds to egr released from apoptotic epidermal cells and plays a role in development of thermal allodynia, a responsiveness to subthreshold thermal stimuli which are not normally perceived as noxious. Together with Moe, involved in control of axon targeting of R8 and R2-R5 photoreceptors, independent of egr. This chain is Tumor necrosis factor receptor superfamily member wgn, found in Drosophila melanogaster (Fruit fly).